The following is a 164-amino-acid chain: Putative pre-16S rRNA nuclease (164 aa).

This sequence belongs to the YqgF nuclease family.

Its subcellular location is the cytoplasm. Could be a nuclease involved in processing of the 5'-end of pre-16S rRNA. This Caulobacter sp. (strain K31) protein is Putative pre-16S rRNA nuclease.